The following is a 122-amino-acid chain: Large ribosomal subunit protein uL14 (122 aa).

It belongs to the universal ribosomal protein uL14 family. Part of the 50S ribosomal subunit. Forms a cluster with proteins L3 and L19. In the 70S ribosome, L14 and L19 interact and together make contacts with the 16S rRNA in bridges B5 and B8.

Binds to 23S rRNA. Forms part of two intersubunit bridges in the 70S ribosome. This chain is Large ribosomal subunit protein uL14, found in Treponema denticola (strain ATCC 35405 / DSM 14222 / CIP 103919 / JCM 8153 / KCTC 15104).